The sequence spans 429 residues: Septin-8 (429 aa).

Over residues methionine 1–proline 16 the composition is skewed to basic and acidic residues. Residues methionine 1–glycine 23 form a disordered region. At alanine 2 the chain carries N-acetylalanine. A Phosphoserine modification is found at serine 10. A Septin-type G domain is found at glutamine 41–glutamate 307. The segment at glycine 51–serine 58 is G1 motif. GTP is bound by residues glycine 51–serine 58, glycine 106, lysine 187–glutamate 195, glycine 241, and arginine 256. The G3 motif stretch occupies residues aspartate 103 to glycine 106. Residues alanine 186–aspartate 189 are G4 motif. Residues phenylalanine 320–alanine 412 are a coiled coil. The segment covering glutamine 409–proline 420 has biased composition (polar residues). The tract at residues glutamine 409 to asparagine 429 is disordered.

Belongs to the TRAFAC class TrmE-Era-EngA-EngB-Septin-like GTPase superfamily. Septin GTPase family. Septins polymerize into heterooligomeric protein complexes that form filaments, and can associate with cellular membranes, actin filaments and microtubules. GTPase activity is required for filament formation. Interacts with SEPTIN5. Interacts with CDK14, SEPTIN4 and SEPTIN7. Interacts with VAMP2; the interaction inhibits interaction of VAMP2 with SYP. Interacts with STX1A.

The protein localises to the cytoplasm. Its subcellular location is the cytoskeleton. The protein resides in the synapse. It localises to the cell projection. It is found in the axon. The protein localises to the cytoplasmic vesicle. Its subcellular location is the secretory vesicle. The protein resides in the synaptic vesicle membrane. It localises to the presynapse. Its function is as follows. Filament-forming cytoskeletal GTPase. May play a role in platelet secretion. Seems to participate in the process of SNARE complex formation in synaptic vesicles. The protein is Septin-8 of Mus musculus (Mouse).